The chain runs to 1849 residues: SH3 and multiple ankyrin repeat domains protein 2 (1849 aa).

The interval 1 to 33 is disordered; that stretch reads MPRSPTSSEDEMAQSFSDYSVGSESDSSKEETI. Residues 15-25 are compositionally biased toward low complexity; sequence SFSDYSVGSES. 6 ANK repeats span residues 196–226, 230–259, 263–293, 297–326, 330–359, and 363–393; these read TGET…HLDF, DGMT…SPDY, YGLT…TVCC, NGWH…DMSA, SGNT…NKEL, and NSQT…DIVP. Positions 451-493 are disordered; it reads QQMPSKPEGAAKTIGSYVPGPRSRSPSLNRLGGAGEDGKRPQP. Residues 526–585 enclose the SH3 domain; that stretch reads VPGRLFVAVKPYQPQVDGEIPLHRGDRVKVLSIGEGGFWEGSARGHIGWFPAECVEEVQC. A PDZ domain is found at 626-720; the sequence is TVVLQKKDNE…HLVLKVVTVT (95 aa). The span at 764–774 shows a compositional bias: basic and acidic residues; that stretch reads SVRKKKDKPEE. Positions 764–808 are disordered; sequence SVRKKKDKPEEIVPASKPSRAAENMAVEPRVATIKQRPSSRCFPA. Residue serine 831 is modified to Phosphoserine. Phosphothreonine is present on threonine 860. The interval 878–910 is disordered; that stretch reads LSMPDTSEDIPPPPQSVPPSPPPPSPTTYNCPK. Positions 887–903 are enriched in pro residues; the sequence is IPPPPQSVPPSPPPPSP. Serine 960 is modified (phosphoserine). Disordered regions lie at residues 1013–1293, 1328–1371, 1432–1526, and 1574–1594; these read LVKQ…RKGD, LQEE…TTVP, PALS…GGEN, and SFVI…PGMA. Residues 1040-1052 show a composition bias toward low complexity; that stretch reads STSSSGKSSQGSS. The segment covering 1086–1097 has biased composition (basic and acidic residues); sequence VRDREKRLEARR. At serine 1099 the chain carries Phosphoserine. Acidic residues predominate over residues 1128 to 1138; the sequence is EEGDFADEDSA. Composition is skewed to low complexity over residues 1159 to 1170, 1181 to 1199, and 1208 to 1221; these read GGAEASAPGEAG, GPES…AGPG, and RLLD…LALS. Over residues 1274–1293 the composition is skewed to basic and acidic residues; sequence RRQETENKYETDLGRDRKGD. Phosphothreonine is present on threonine 1278. The SH3-binding motif lies at 1327–1333; it reads ALQEEDE. The span at 1343-1357 shows a compositional bias: low complexity; the sequence is SSPSEVPEGVSETEG. Residues 1445 to 1460 show a composition bias toward polar residues; it reads TPQSPSLNSSQPTNSA. The span at 1494–1505 shows a compositional bias: basic and acidic residues; the sequence is VDSRSSSDHHLE. A compositionally biased stretch (low complexity) spans 1506-1522; the sequence is TTSTISTVSSISTLSSE. A compositionally biased stretch (pro residues) spans 1577 to 1588; sequence IPPPAPPPPPGS. A glycan (O-linked (GlcNAc) threonine) is linked at threonine 1667. Residues 1678–1692 show a composition bias toward polar residues; it reads FTVRPGTSQPITLQS. The disordered stretch occupies residues 1678-1776; sequence FTVRPGTSQP…SILQQPISNK (99 aa). Phosphoserine occurs at positions 1709 and 1713. Composition is skewed to low complexity over residues 1721-1738 and 1760-1774; these read TLPA…PALS and RSRS…QPIS. Residues 1786–1849 enclose the SAM domain; sequence WTKPDVADWL…ERALKQLLDR (64 aa).

It belongs to the SHANK family. Is part of a complex with DLG4/PSD-95 and DLGAP1/GKAP. Interacts with CTTN/cortactin SH3 domain, DLGAP1/GKAP and alpha-latrotoxin receptor 1. Interacts with DNM2, DBNL, GRID2, BAIAP2, SLC9A3, PLCB3 and CFTR. Interacts (via proline-rich region) with PDE4D. Interacts with ABI1 (via SH3 domain). Isoform 3 is present in epithelial colonic cells (at protein level).

It localises to the apical cell membrane. It is found in the cytoplasm. The protein resides in the synapse. Its subcellular location is the postsynaptic density. The protein localises to the cell projection. It localises to the growth cone. It is found in the dendritic spine. In terms of biological role, seems to be an adapter protein in the postsynaptic density (PSD) of excitatory synapses that interconnects receptors of the postsynaptic membrane including NMDA-type and metabotropic glutamate receptors, and the actin-based cytoskeleton. May play a role in the structural and functional organization of the dendritic spine and synaptic junction. The polypeptide is SH3 and multiple ankyrin repeat domains protein 2 (SHANK2) (Homo sapiens (Human)).